Consider the following 586-residue polypeptide: ATP-dependent lipid A-core flippase (586 aa).

The next 4 membrane-spanning stretches (helical) occupy residues 25–45 (AYFI…AQLI), 74–94 (LWFV…GAYF), 163–183 (VAWF…AFIC), and 264–284 (VLHI…MILW). In terms of domain architecture, ABC transmembrane type-1 spans 28–317 (IISFIGFGVF…LTKINSIIQK (290 aa)). One can recognise an ABC transporter domain in the interval 349–583 (VELKDVHFGY…SGVYANLYHS (235 aa)). 382 to 389 (GSSGSGKS) lines the ATP pocket.

This sequence belongs to the ABC transporter superfamily. Lipid exporter (TC 3.A.1.106) family. As to quaternary structure, homodimer.

The protein resides in the cell inner membrane. The enzyme catalyses ATP + H2O + lipid A-core oligosaccharideSide 1 = ADP + phosphate + lipid A-core oligosaccharideSide 2.. Its function is as follows. Involved in lipopolysaccharide (LPS) biosynthesis. Translocates lipid A-core from the inner to the outer leaflet of the inner membrane. Transmembrane domains (TMD) form a pore in the inner membrane and the ATP-binding domain (NBD) is responsible for energy generation. This chain is ATP-dependent lipid A-core flippase, found in Saccharophagus degradans (strain 2-40 / ATCC 43961 / DSM 17024).